The sequence spans 300 residues: Very-long-chain enoyl-CoA reductase (300 aa).

A helical transmembrane segment spans residues 91–111 (SLVFICEYAGPLFVYPIFYFL). Asn163 is a glycosylation site (N-linked (GlcNAc...) asparagine). A helical membrane pass occupies residues 191–211 (VYLGLGLWIIGEVFNYICHIQ). Asn238 carries an N-linked (GlcNAc...) asparagine glycan. A helical transmembrane segment spans residues 243-263 (ILSWIGFSILTQTLTSWIFAL).

It belongs to the steroid 5-alpha reductase family.

The protein resides in the endoplasmic reticulum membrane. The catalysed reaction is a very-long-chain 2,3-saturated fatty acyl-CoA + NADP(+) = a very-long-chain (2E)-enoyl-CoA + NADPH + H(+). The protein operates within lipid metabolism; fatty acid biosynthesis. Functionally, catalyzes the last of the four reactions of the long-chain fatty acids elongation cycle. This endoplasmic reticulum-bound enzymatic process, allows the addition of 2 carbons to the chain of long- and very long-chain fatty acids/VLCFAs per cycle. This enzyme reduces the trans-2,3-enoyl-CoA fatty acid intermediate to an acyl-CoA that can be further elongated by entering a new cycle of elongation. Thereby, it participates in the production of VLCFAs of different chain lengths that are involved in multiple biological processes as precursors of membrane lipids and lipid mediators. The polypeptide is Very-long-chain enoyl-CoA reductase (gpsn2) (Dictyostelium discoideum (Social amoeba)).